A 111-amino-acid polypeptide reads, in one-letter code: uncharacterized protein (111 aa).

The helical transmembrane segment at 48–70 (LFLVPFPASFTRWLTFLFHLVIY) threads the bilayer.

It localises to the membrane. This is an uncharacterized protein from Saccharomyces cerevisiae (strain ATCC 204508 / S288c) (Baker's yeast).